The sequence spans 76 residues: DNA-directed RNA polymerase subunit epsilon (76 aa).

It belongs to the RNA polymerase subunit epsilon family. As to quaternary structure, RNAP is composed of a core of 2 alpha, a beta and a beta' subunit. The core is associated with a delta subunit, and at least one of epsilon or omega. When a sigma factor is associated with the core the holoenzyme is formed, which can initiate transcription.

The catalysed reaction is RNA(n) + a ribonucleoside 5'-triphosphate = RNA(n+1) + diphosphate. Its function is as follows. A non-essential component of RNA polymerase (RNAP). The polypeptide is DNA-directed RNA polymerase subunit epsilon (Streptococcus equi subsp. equi (strain 4047)).